Consider the following 354-residue polypeptide: S-adenosylmethionine-dependent nucleotide dehydratase RSAD2 (354 aa).

One can recognise a Radical SAM core domain in the interval 62–282 (AMTPTSVNYH…LDRHSSISCL (221 aa)). Residues Cys76, Cys80, and Cys83 each coordinate [4Fe-4S] cluster.

This sequence belongs to the radical SAM superfamily. RSAD2 family. Requires [4Fe-4S] cluster as cofactor. Constitutively expressed in spleen, head kidney and trunk kidney. Following viral infection, detected in most organs including liver, gill, intestine, heart, muscle and brain.

It is found in the endoplasmic reticulum membrane. Functionally, interferon-inducible iron-sulfur (4FE-4S) cluster-binding antiviral protein which plays a major role in the cell antiviral state induced by type I and type II interferon. The chain is S-adenosylmethionine-dependent nucleotide dehydratase RSAD2 from Siniperca chuatsi (Mandarin fish).